The chain runs to 1912 residues: Methylcytosine dioxygenase TET2 (1912 aa).

Residues 1–11 show a composition bias toward basic and acidic residues; that stretch reads MEQDRTTHAEG. The disordered stretch occupies residues 1–86; that stretch reads MEQDRTTHAE…PHEDRGYSRC (86 aa). Phosphoserine occurs at positions 15 and 23. Residues 53 to 74 are compositionally biased toward polar residues; the sequence is TKWQSSQSCYGISHMKGSQSSH. Residues Ser76 and Ser97 each carry the phosphoserine modification. 8 disordered regions span residues 112–166, 340–359, 367–388, 429–470, 673–723, 832–862, 907–966, and 1009–1052; these read LDQK…FPTR, DRNL…QKET, SSKF…QSLL, IDHQ…PEKS, PQTQ…DKQR, EQAQ…AEAA, QEQQ…NGQP, and ESEN…EGCN. Composition is skewed to polar residues over residues 135 to 158, 340 to 353, 367 to 387, 434 to 447, and 673 to 689; these read SRQP…QESS, DRNL…SEQY, SSKF…SQSL, KTSS…SVHT, and PQTQ…SNFP. Low complexity predominate over residues 690–701; that stretch reads QICQQQQQQQLQ. Polar residues-rich tracts occupy residues 707–719 and 832–844; these read QMPQ…QGSN and EQAQ…SSLQ. Residues 907–921 are compositionally biased toward low complexity; it reads QEQQQTQQSQPGHNQ. Polar residues-rich tracts occupy residues 944–966 and 1036–1046; these read PQEN…NGQP and SDTPGEQSQNG. Residue Ser1036 is modified to Phosphoserine. Residues Cys1048, Cys1106, His1132, and Cys1134 each contribute to the Zn(2+) site. 2-oxoglutarate is bound at residue Arg1174. Positions 1184, 1186, 1202, and 1211 each coordinate Zn(2+). Residues 1203–1216 form an interaction with DNA region; sequence SWSMYYNGCKFARS. Lys1212 is covalently cross-linked (Glycyl lysine isopeptide (Lys-Gly) (interchain with G-Cter in ubiquitin)). Cys1271 serves as a coordination point for Zn(2+). Cys1287 contributes to the 2-oxoglutarate binding site. His1293 provides a ligand contact to Zn(2+). Residues His1295 and Asp1297 each coordinate Fe cation. Position 1300 (Asn1300) interacts with substrate. His1329 contributes to the 2-oxoglutarate binding site. Disordered regions lie at residues 1379–1414 and 1444–1514; these read KKKA…SSSH and LQRH…HTSD. The segment covering 1387–1396 has biased composition (basic residues); it reads AKTKKAARKR. The segment covering 1456–1473 has biased composition (pro residues); it reads QPQPPQPQPQTTPQPQPQ. A compositionally biased stretch (polar residues) spans 1480–1512; it reads GNSQSVGSHCSGSTSVYTRQPTPHSPYPSSAHT. His1795 contributes to the Fe cation binding site. 1810–1812 contacts 2-oxoglutarate; it reads RIS. 1816–1818 lines the substrate pocket; the sequence is YRH. His1826 provides a ligand contact to Zn(2+). A compositionally biased stretch (basic and acidic residues) spans 1842-1866; it reads EEECGKNGSDHVSQKNHGKQEKREP. The segment at 1842 to 1871 is disordered; sequence EEECGKNGSDHVSQKNHGKQEKREPTGPQE.

It belongs to the TET family. Interacts with HCFC1. Interacts with OGT. Interacts with PROSER1; this interaction mediates TET2 O-GlcNAcylation and stability by promoting the interaction between OGT and TET2. Directly interacts (via C-terminus) with the DCAF1 component of the CRL4(VprBP) E3 ubiquitin-protein ligase complex. Requires Fe(2+) as cofactor. The cofactor is Zn(2+). In terms of processing, may be glycosylated. It is unclear whether interaction with OGT leads to GlcNAcylation. According to a report, it is GlcNAcylated by OGT. In contrast, another group reports no GlcNAcylation by OGT in human ortholog. Monoubiquitinated at Lys-1212 by the DCX (DDB1-CUL4-X-box) E3 ubiquitin-protein ligase complex called CRL4(VprBP) or CUL4A-RBX1-DDB1-DCAF1/VPRBP complex; this modification promotes binding to DNA. Post-translationally, acetylated. In terms of tissue distribution, expressed in the brain, kidney, heart, lung, muscle and stomach. Expressed in germinal vesicle (GV) stage and MII-stage oocytes and in early embryos. Present in embryonic stem cells (ES cells).

The protein resides in the nucleus. The protein localises to the chromosome. It catalyses the reaction a 5-methyl-2'-deoxycytidine in DNA + 2-oxoglutarate + O2 = a 5-hydroxymethyl-2'-deoxycytidine in DNA + succinate + CO2. It carries out the reaction a 5-hydroxymethyl-2'-deoxycytidine in DNA + 2-oxoglutarate + O2 = a 5-formyl-2'-deoxycytidine in DNA + succinate + CO2 + H2O. The catalysed reaction is a 5-formyl-2'-deoxycytidine in DNA + 2-oxoglutarate + O2 = a 5-carboxyl-2'-deoxycytidine in DNA + succinate + CO2 + H(+). Dioxygenase that catalyzes the conversion of the modified genomic base 5-methylcytosine (5mC) into 5-hydroxymethylcytosine (5hmC) and plays a key role in active DNA demethylation. Has a preference for 5-hydroxymethylcytosine in CpG motifs. Also mediates subsequent conversion of 5hmC into 5-formylcytosine (5fC), and conversion of 5fC to 5-carboxylcytosine (5caC). Conversion of 5mC into 5hmC, 5fC and 5caC probably constitutes the first step in cytosine demethylation. Methylation at the C5 position of cytosine bases is an epigenetic modification of the mammalian genome which plays an important role in transcriptional regulation. In addition to its role in DNA demethylation, also involved in the recruitment of the O-GlcNAc transferase OGT to CpG-rich transcription start sites of active genes, thereby promoting histone H2B GlcNAcylation by OGT. This is Methylcytosine dioxygenase TET2 (Tet2) from Mus musculus (Mouse).